Here is a 336-residue protein sequence, read N- to C-terminus: Probable deoxyhypusine synthase (336 aa).

Catalysis depends on lysine 308, which acts as the Nucleophile.

This sequence belongs to the deoxyhypusine synthase family. The cofactor is NAD(+).

It catalyses the reaction [eIF5A protein]-L-lysine + spermidine = [eIF5A protein]-deoxyhypusine + propane-1,3-diamine. The protein operates within protein modification; eIF5A hypusination. In terms of biological role, catalyzes the NAD-dependent oxidative cleavage of spermidine and the subsequent transfer of the butylamine moiety of spermidine to the epsilon-amino group of a specific lysine residue of the eIF-5A precursor protein to form the intermediate deoxyhypusine residue. The sequence is that of Probable deoxyhypusine synthase from Pyrococcus furiosus (strain ATCC 43587 / DSM 3638 / JCM 8422 / Vc1).